A 28-amino-acid polypeptide reads, in one-letter code: Peptide 2 (28 aa).

It belongs to the short scorpion toxin superfamily. Potassium channel inhibitor family. Alpha-KTx 09 subfamily. As to expression, expressed by the venom gland.

It localises to the secreted. Blocks potassium channels. The protein is Peptide 2 of Hottentotta tamulus sindicus (Scorpion).